The following is a 98-amino-acid chain: U-megalopygitoxin(1)-Mo1 (98 aa).

The N-terminal stretch at 1 to 17 is a signal peptide; that stretch reads MYRETFVFCVLLAVVSA.

This sequence belongs to the caterpillar 1 family. Post-translationally, contains 4 disulfide bonds. As to expression, expressed by the venom apparatus.

Its subcellular location is the secreted. Its function is as follows. Probable toxin. The polypeptide is U-megalopygitoxin(1)-Mo1 (Megalopyge opercularis (Southern flannel moth)).